A 76-amino-acid chain; its full sequence is Small ribosomal subunit protein bS18 (76 aa).

It belongs to the bacterial ribosomal protein bS18 family. As to quaternary structure, part of the 30S ribosomal subunit. Forms a tight heterodimer with protein bS6.

In terms of biological role, binds as a heterodimer with protein bS6 to the central domain of the 16S rRNA, where it helps stabilize the platform of the 30S subunit. The protein is Small ribosomal subunit protein bS18 of Stutzerimonas stutzeri (strain A1501) (Pseudomonas stutzeri).